Reading from the N-terminus, the 630-residue chain is Scarecrow-like protein 34 (630 aa).

The GRAS domain occupies 240–628 (KKKKSQVVDF…RTLYASSCWV (389 aa)). The interval 247–312 (VDFRTLLTHC…GSTGPMIQTY (66 aa)) is leucine repeat I (LRI). Residues 331–396 (YRVYLSSSPF…DVPRKLRITG (66 aa)) are VHIID. Positions 362 to 366 (LHIVD) match the VHIID motif. The tract at residues 412-444 (ETGRRLAEYCKRFNVPFEYKAIASQNWETIRIE) is leucine repeat II (LRII). The segment at 454-549 (LAVNAGLRLK…REFYGREAMN (96 aa)) is PFYRE. The segment at 552 to 628 (ACEEADRVER…RTLYASSCWV (77 aa)) is SAW.

This sequence belongs to the GRAS family.

The protein localises to the nucleus. Functionally, probable transcription factor involved in plant development. This is Scarecrow-like protein 34 (SCL34) from Arabidopsis thaliana (Mouse-ear cress).